The following is a 336-amino-acid chain: Aspartate--ammonia ligase (336 aa).

This sequence belongs to the class-II aminoacyl-tRNA synthetase family. AsnA subfamily.

Its subcellular location is the cytoplasm. The catalysed reaction is L-aspartate + NH4(+) + ATP = L-asparagine + AMP + diphosphate + H(+). It functions in the pathway amino-acid biosynthesis; L-asparagine biosynthesis; L-asparagine from L-aspartate (ammonia route): step 1/1. This is Aspartate--ammonia ligase from Limosilactobacillus reuteri (strain DSM 20016) (Lactobacillus reuteri).